A 559-amino-acid chain; its full sequence is MDSTEDRETPLKDQIRRLTNENVQLQDRNERLYAKLGELQDKMGKLAGSKTDLSSKLVLSEEEKLKISKELIELQIETNKIREHYEAETFELKNTILTLENRLMSLELQKEKLAGEHESVKERLQAVDANRKELADEYIVLKSNYLALSKEHEKEVAKNDELSMELLNLASRRGQDETYSQSRALVNEATAELDRVKAMVNRLSARNIKPEDLVATEYERQKLERNLLGNQDHIREEIENMKKIHETQQQRLEERIIAMGKELQEAKRAIRNTQHKMAEQSAVLLTSQSQLQETEAQNSHLQLQLKELNEEYRSRLNRYIQDLADYVDGTARSKGDGTRMKHFVDNMLSDIKASHRSREEQLAGAARQYKKRMQNLIKKHQSLLIAYRMQREQLLASGNQDVEPGPPEHHFTITDPELQSQVGLELNRLREDKARLETQIHDLKEKKRLSDAGTSNQHVEHGGKLQEESWAEIRKQLREFTHNTQEELERERSQLLSRALVAEEQVAELQDYVDKHLARYKQEILRLRKLLGNEEQRAVSADAPQSLLIRALRRNSHEM.

Basic and acidic residues predominate over residues 1 to 19 (MDSTEDRETPLKDQIRRLT). The disordered stretch occupies residues 1–20 (MDSTEDRETPLKDQIRRLTN). Coiled-coil stretches lie at residues 9 to 327 (TPLK…ADYV) and 419 to 541 (QSQV…AVSA).

Belongs to the CCDC78 family. Restricted to multiciliated cells.

The protein localises to the cytoplasm. Its subcellular location is the cytoskeleton. It is found in the microtubule organizing center. The protein resides in the centrosome. It localises to the centriole. Component of the deuterosome, a structure that promotes de novo centriole amplification in multiciliated cells that can generate more than 100 centrioles. Deuterosome-mediated centriole amplification occurs in terminally differentiated multiciliated cells (G1/0) and not in S phase. Essential for centriole amplification and is required for cep152 localization to the deuterosome. In Xenopus laevis (African clawed frog), this protein is Coiled-coil domain-containing protein 78 (ccdc78).